The primary structure comprises 345 residues: Fructose-1,6-bisphosphatase class 1 1 (345 aa).

The Mg(2+) site is built by Glu-90, Asp-109, Leu-111, and Asp-112. Substrate-binding positions include 112-115 (DGSS) and Asn-200. Position 272 (Glu-272) interacts with Mg(2+).

Belongs to the FBPase class 1 family. In terms of assembly, homotetramer. Mg(2+) serves as cofactor.

It localises to the cytoplasm. The catalysed reaction is beta-D-fructose 1,6-bisphosphate + H2O = beta-D-fructose 6-phosphate + phosphate. It participates in carbohydrate biosynthesis; gluconeogenesis. In Nitrobacter hamburgensis (strain DSM 10229 / NCIMB 13809 / X14), this protein is Fructose-1,6-bisphosphatase class 1 1.